Consider the following 428-residue polypeptide: 5'-nucleotidase domain-containing protein 4 (428 aa).

Asp22 (nucleophile) is an active-site residue. Positions 22, 24, and 317 each coordinate Mg(2+). The Proton donor role is filled by Asp24.

This sequence belongs to the 5'(3')-deoxyribonucleotidase family.

The sequence is that of 5'-nucleotidase domain-containing protein 4 (NT5DC4) from Homo sapiens (Human).